The chain runs to 460 residues: Armadillo repeat-containing protein LFR (460 aa).

A compositionally biased stretch (low complexity) spans 1-10 (MSHVRSAPAG). The interval 1-32 (MSHVRSAPAGKSGGGGGSTPAKRGRPFGSTTG) is disordered. 3 ARM repeats span residues 225–267 (ENET…NLAP), 321–360 (NEPF…NVAE), and 364–405 (DFRL…SLVS).

Interacts with CHR719, SWI3A and SWI3C. Expressed at low levels in coleoptiles, leaf tongues, mature leaves and nodes during the vegetative phase. Highly expressed in reproductive tissues such as young panicles, early developing seeds, embryos and endosperms.

The protein localises to the nucleus. In terms of biological role, plays critical roles in both embryo and endosperm development. Required for free nuclei division and cellularization in early endosperm development, by preventing premature cell death in the endosperm. Involved in the regulation of pattern formation and organ differentiation during embryogenesis, by regulating genes involved in the early stages of seed development. This Oryza sativa subsp. japonica (Rice) protein is Armadillo repeat-containing protein LFR.